The sequence spans 124 residues: Large ribosomal subunit protein mL52 (124 aa).

A mitochondrion-targeting transit peptide spans 1 to 23; the sequence is MAALGMLLSTGVRRLHCGSAARA. The interval 99–124 is disordered; it reads LQEEKRKQQNALKPKGVLLQNPGPSQ.

It belongs to the mitochondrion-specific ribosomal protein mL52 family. In terms of assembly, component of the mitochondrial ribosome large subunit (39S) which comprises a 16S rRNA and about 50 distinct proteins.

The protein localises to the mitochondrion. In Bos taurus (Bovine), this protein is Large ribosomal subunit protein mL52 (MRPL52).